Here is a 347-residue protein sequence, read N- to C-terminus: Oxygen sensor histidine kinase NreB (347 aa).

Residues Cys59, Cys62, Cys74, and Cys77 each contribute to the [4Fe-4S] cluster site. A Histidine kinase domain is found at 153 to 347; that stretch reads RISRELHDGI…IVTLEVPITD (195 aa). Phosphohistidine; by autocatalysis is present on His159.

The cofactor is [4Fe-4S] cluster. In terms of processing, autophosphorylated.

It is found in the cytoplasm. The enzyme catalyses ATP + protein L-histidine = ADP + protein N-phospho-L-histidine.. Its activity is regulated as follows. Activated by cysteine desulfurase, Fe(2+) ions and cysteine and inhibited by oxygen and ADP. In terms of biological role, member of the two-component regulatory system NreB/NreC involved in the control of dissimilatory nitrate/nitrite reduction in response to oxygen. NreB functions as a direct oxygen sensor histidine kinase which is autophosphorylated, in the absence of oxygen, probably at the conserved histidine residue, and transfers its phosphate group probably to a conserved aspartate residue of NreC. NreB/NreC activates the expression of the nitrate (narGHJI) and nitrite (nir) reductase operons, as well as the putative nitrate transporter gene narT. This chain is Oxygen sensor histidine kinase NreB (nreB), found in Staphylococcus carnosus (strain TM300).